A 391-amino-acid chain; its full sequence is MAVAAMAERGRLSHAAPAPSTEGLPRAFLQSLRTLFDILDDRQRGYVHLREIESRWQGADARELPCGVLEGLRQVAPANGYLTFERFVAGLRTSLLKADGGQRDQARVAARPGDQSSLQQRLMFAPADEPRTVLERKPLPLSACPASGGPSGTSRNPELLCVPVEAASCPTETERPLSKALEQIPSADLGAAACKTLGKGTGEARQAPRARGERRRHTITNGVDCSLLKQMKELDQEQEVLLQGLEMMARGRDWYQQQLQRVQERQRRLSQSRAAADFGAEGSPRPLGRLLPKVQEVARCLGELLTAACSGRALPSSSLGPLGPPSPSTPVWQQQTILMLKEQNRLLTQEVTDKSERITQLEQEKSALIKQLFEARALSQQDSGPLDSTFI.

Residues 1 to 20 form a disordered region; sequence MAVAAMAERGRLSHAAPAPS. A Phosphothreonine modification is found at Thr-218. The stretch at 226–277 forms a coiled coil; it reads SLLKQMKELDQEQEVLLQGLEMMARGRDWYQQQLQRVQERQRRLSQSRAAAD. At Ser-283 the chain carries Phosphoserine. Residues 340-381 are a coiled coil; the sequence is LKEQNRLLTQEVTDKSERITQLEQEKSALIKQLFEARALSQQ.

In terms of assembly, interacts with a spindle orientation complex at least composed of GNAI1, GPSM2 and NUMA1. Interacts with GPSM2 (via TPR motifs); this interaction is required to prevent GPSM2 anchoring at the mitotic apical cortex and is inhibited in presence of NUMA1 in a dose dependent manner. Interacts with PARD3. In terms of tissue distribution, expressed in the retina. Expressed in retinal progenitor cells and newly differentiated neurons but not in mature retinal cells (at protein level).

The protein localises to the cytoplasm. It localises to the nucleus. Its subcellular location is the cell cortex. The protein resides in the apical cell membrane. It is found in the cell junction. The protein localises to the tight junction. In terms of biological role, plays a role in planar mitotic spindle orientation in retinal progenitor cells (RPCs) and promotes the production of symmetric terminal divisions. Negatively regulates the mitotic apical cortex localization of GPSM2. Involved also in positive regulation of cell proliferation and tumor cell growth. This Mus musculus (Mouse) protein is Suppressor APC domain-containing protein 2.